A 117-amino-acid polypeptide reads, in one-letter code: Cell cycle protein GpsB (117 aa).

Residues 32–70 (LDNVIKDYDAFVKENQRLQDENERLLAKVDELTRQVQVG) are a coiled coil.

This sequence belongs to the GpsB family. Forms polymers through the coiled coil domains. Interacts with PBP1, MreC and EzrA.

The protein resides in the cytoplasm. Functionally, divisome component that associates with the complex late in its assembly, after the Z-ring is formed, and is dependent on DivIC and PBP2B for its recruitment to the divisome. Together with EzrA, is a key component of the system that regulates PBP1 localization during cell cycle progression. Its main role could be the removal of PBP1 from the cell pole after pole maturation is completed. Also contributes to the recruitment of PBP1 to the division complex. Not essential for septum formation. This Levilactobacillus brevis (strain ATCC 367 / BCRC 12310 / CIP 105137 / JCM 1170 / LMG 11437 / NCIMB 947 / NCTC 947) (Lactobacillus brevis) protein is Cell cycle protein GpsB.